The sequence spans 131 residues: MTPFPPPLSGSAQDETPELRPRFDENGLIAAIAQDAGTGEVLMLAWMNAEALQKTIETGRATYWSRSRGALWVKGETSGHTQEVIELRVDCDQDAVLLKVRQTGGACHTHRESCFYRRIEGGVLSFTGKAD.

Asp-90 provides a ligand contact to Mg(2+). Residue Cys-91 participates in Zn(2+) binding. 2 residues coordinate Mg(2+): Asp-92 and Asp-94. Cys-107 and Cys-114 together coordinate Zn(2+).

Belongs to the PRA-CH family. Homodimer. The cofactor is Mg(2+). Zn(2+) serves as cofactor.

Its subcellular location is the cytoplasm. It catalyses the reaction 1-(5-phospho-beta-D-ribosyl)-5'-AMP + H2O = 1-(5-phospho-beta-D-ribosyl)-5-[(5-phospho-beta-D-ribosylamino)methylideneamino]imidazole-4-carboxamide. It participates in amino-acid biosynthesis; L-histidine biosynthesis; L-histidine from 5-phospho-alpha-D-ribose 1-diphosphate: step 3/9. Functionally, catalyzes the hydrolysis of the adenine ring of phosphoribosyl-AMP. This chain is Phosphoribosyl-AMP cyclohydrolase, found in Hyphomonas neptunium (strain ATCC 15444).